The sequence spans 318 residues: Pantothenate kinase (318 aa).

96-103 (GSVAVGKS) is an ATP binding site.

The protein belongs to the prokaryotic pantothenate kinase family.

It is found in the cytoplasm. It carries out the reaction (R)-pantothenate + ATP = (R)-4'-phosphopantothenate + ADP + H(+). The protein operates within cofactor biosynthesis; coenzyme A biosynthesis; CoA from (R)-pantothenate: step 1/5. This chain is Pantothenate kinase, found in Rhodopseudomonas palustris (strain BisA53).